The sequence spans 107 residues: Nucleoid-associated protein BT_0257 (107 aa).

It belongs to the YbaB/EbfC family. Homodimer.

It is found in the cytoplasm. It localises to the nucleoid. Functionally, binds to DNA and alters its conformation. May be involved in regulation of gene expression, nucleoid organization and DNA protection. This is Nucleoid-associated protein BT_0257 from Bartonella tribocorum (strain CIP 105476 / IBS 506).